The following is a 200-amino-acid chain: Coiled-coil domain-containing protein 28B (200 aa).

At methionine 1 the chain carries N-acetylmethionine. A compositionally biased stretch (basic residues) spans 1-10 (MEDKKKKRSP). Positions 1–49 (MEDKKKKRSPKPCLTQPAQAPGTLRRVPVPTSHSGSLALGLPHLPSPKQ) are disordered. Residues serine 46 and serine 115 each carry the phosphoserine modification. Acidic residues predominate over residues 140–152 (GEEEDEEEEEDGV). Residues 140-165 (GEEEDEEEEEDGVTEGLPEEQKKTMA) are disordered. A coiled-coil region spans residues 158–189 (EEQKKTMADRNLDQLLSNLEDLSNSIQKLHLA).

Interacts with BBS1, BBS2, BBS4, BBS5, BBS6, BBS7 and TTC8/BBS8. Interacts with MAPKAP1/SIN1 isoform 1 and RICTOR. As to expression, expressed in the retina, pericardium and limb epithelium.

It localises to the cytoplasm. The protein localises to the cytoskeleton. The protein resides in the microtubule organizing center. Its subcellular location is the centrosome. Its function is as follows. Involved in ciliogenesis. Regulates cilia length through its interaction with MAPKAP1/SIN1 but independently of mTORC2 complex. Modulates mTORC2 complex assembly and function, possibly enhances AKT1 phosphorylation. Does not seem to modulate assembly and function of mTORC1 complex. The polypeptide is Coiled-coil domain-containing protein 28B (Ccdc28b) (Mus musculus (Mouse)).